A 212-amino-acid chain; its full sequence is Pyridoxine/pyridoxamine 5'-phosphate oxidase (212 aa).

Substrate-binding positions include 8–11 (RREY) and Lys66. Residues 61-66 (RIVLLK), 76-77 (FT), Arg82, Lys83, and Gln105 contribute to the FMN site. Substrate-binding residues include Tyr123, Arg127, and Ser131. Residues 140-141 (QS) and Trp185 contribute to the FMN site. 191–193 (RLH) contacts substrate. Arg195 is an FMN binding site.

It belongs to the pyridoxamine 5'-phosphate oxidase family. Homodimer. The cofactor is FMN.

It carries out the reaction pyridoxamine 5'-phosphate + O2 + H2O = pyridoxal 5'-phosphate + H2O2 + NH4(+). The enzyme catalyses pyridoxine 5'-phosphate + O2 = pyridoxal 5'-phosphate + H2O2. It functions in the pathway cofactor metabolism; pyridoxal 5'-phosphate salvage; pyridoxal 5'-phosphate from pyridoxamine 5'-phosphate: step 1/1. It participates in cofactor metabolism; pyridoxal 5'-phosphate salvage; pyridoxal 5'-phosphate from pyridoxine 5'-phosphate: step 1/1. Its function is as follows. Catalyzes the oxidation of either pyridoxine 5'-phosphate (PNP) or pyridoxamine 5'-phosphate (PMP) into pyridoxal 5'-phosphate (PLP). In Shewanella sp. (strain W3-18-1), this protein is Pyridoxine/pyridoxamine 5'-phosphate oxidase.